A 373-amino-acid chain; its full sequence is Histidinol-phosphate aminotransferase (373 aa).

Lysine 231 carries the N6-(pyridoxal phosphate)lysine modification.

The protein belongs to the class-II pyridoxal-phosphate-dependent aminotransferase family. Histidinol-phosphate aminotransferase subfamily. Pyridoxal 5'-phosphate serves as cofactor.

The enzyme catalyses L-histidinol phosphate + 2-oxoglutarate = 3-(imidazol-4-yl)-2-oxopropyl phosphate + L-glutamate. It functions in the pathway amino-acid biosynthesis; L-histidine biosynthesis; L-histidine from 5-phospho-alpha-D-ribose 1-diphosphate: step 7/9. The sequence is that of Histidinol-phosphate aminotransferase (hisC) from Methanocaldococcus jannaschii (strain ATCC 43067 / DSM 2661 / JAL-1 / JCM 10045 / NBRC 100440) (Methanococcus jannaschii).